Reading from the N-terminus, the 444-residue chain is Putative permease IIC component YwbA (444 aa).

Residues 8–421 (MEEKIMPVAG…LITCAIYYPF (414 aa)) enclose the PTS EIIC type-3 domain. 10 consecutive transmembrane segments (helical) span residues 31–51 (GIIL…LTSL), 72–92 (LGYP…FGIA), 104–124 (LSAG…EVPF), 138–158 (GIPI…IALF), 187–207 (FVAL…RLLI), 223–243 (LGTP…AEFV), 246–266 (LLWS…APIW), 291–311 (FFQI…VLTM), 349–371 (PLLI…IGMS), and 402–422 (SGAV…YPFF).

The protein localises to the cell membrane. Its function is as follows. The phosphoenolpyruvate-dependent sugar phosphotransferase system (PTS), a major carbohydrate active -transport system, catalyzes the phosphorylation of incoming sugar substrates concomitant with their translocation across the cell membrane. This Bacillus subtilis (strain 168) protein is Putative permease IIC component YwbA (ywbA).